A 303-amino-acid polypeptide reads, in one-letter code: Glyceraldehyde-3-phosphate dehydrogenase (303 aa).

Residues 6–7 (RI), Asp28, Arg72, and Thr114 each bind NAD(+). D-glyceraldehyde 3-phosphate-binding positions include 143 to 145 (SCT), Thr174, 203 to 204 (TG), and Arg226. Catalysis depends on Cys144, which acts as the Nucleophile.

Belongs to the glyceraldehyde-3-phosphate dehydrogenase family. As to quaternary structure, homotetramer.

The protein resides in the cytoplasm. The catalysed reaction is D-glyceraldehyde 3-phosphate + phosphate + NAD(+) = (2R)-3-phospho-glyceroyl phosphate + NADH + H(+). It functions in the pathway carbohydrate degradation; glycolysis; pyruvate from D-glyceraldehyde 3-phosphate: step 1/5. Its function is as follows. Catalyzes the oxidative phosphorylation of glyceraldehyde 3-phosphate (G3P) to 1,3-bisphosphoglycerate (BPG) using the cofactor NAD. The first reaction step involves the formation of a hemiacetal intermediate between G3P and a cysteine residue, and this hemiacetal intermediate is then oxidized to a thioester, with concomitant reduction of NAD to NADH. The reduced NADH is then exchanged with the second NAD, and the thioester is attacked by a nucleophilic inorganic phosphate to produce BPG. This Klebsiella pneumoniae protein is Glyceraldehyde-3-phosphate dehydrogenase (gap).